A 701-amino-acid chain; its full sequence is Interleukin-1 receptor accessory protein-like 1-A (701 aa).

A signal peptide spans 1 to 19 (MTALNPVLFLLCGVSVSLS). Residues 20 to 361 (LKVVSKRGSV…IGKRVELMYT (342 aa)) are Extracellular-facing. Positions 33-133 (TDWSVDYLKY…RNSTFCMKVS (101 aa)) constitute an Ig-like C2-type 1 domain. An intrachain disulfide couples cysteine 54 to cysteine 121. Asparagine 64, asparagine 125, asparagine 141, asparagine 216, asparagine 267, and asparagine 334 each carry an N-linked (GlcNAc...) asparagine glycan. Ig-like C2-type domains follow at residues 146–235 (CYNS…TYLS) and 245–353 (PRIL…VQIG). Cysteine 167 and cysteine 219 are disulfide-bonded. Cysteine 270 and cysteine 337 are disulfide-bonded. The helical transmembrane segment at 362-382 (VELAGGLGAILLLLALLLSVY) threads the bilayer. The Cytoplasmic portion of the chain corresponds to 383–701 (KCYRIELLLC…RETSISSVIW (319 aa)). One can recognise a TIR domain in the interval 407–563 (KEYDAYLSYS…RFWKQLRYTM (157 aa)). The active site involves glutamate 495. The segment at 568–701 (PQQTITNHAL…RETSISSVIW (134 aa)) is required for synaptic vesicle accumulation during synaptogenesis.

Belongs to the interleukin-1 receptor family.

It is found in the cell membrane. The protein resides in the cytoplasm. The enzyme catalyses NAD(+) + H2O = ADP-D-ribose + nicotinamide + H(+). In terms of biological role, may regulate secretion and presynaptic differentiation through inhibition of the activity of N-type voltage-gated calcium channel. During presynaptic differentiation may regulate both synaptic vesicle accumulation in axon terminals and subsequent axon terminal remodeling. The chain is Interleukin-1 receptor accessory protein-like 1-A (il1rapl1a) from Danio rerio (Zebrafish).